The following is a 174-amino-acid chain: MAIREILTVPDPILKEVSQPVDQVDDDLRELMDDMLQTMYAADGIGLAAIQVGVPKRVIVMDLAGSDEEAKPRYFVNPVLSDPSDTLKPYEEGCLSVPTVYDEIERPDRIHIQYLDYDGNECEEIAEGMFAVCIQHEMDHLEGVLFIDYLSRLKRQRAVQKVKKVEKSKDRDAA.

Residues Cys-94 and His-136 each contribute to the Fe cation site. Glu-137 is an active-site residue. His-140 serves as a coordination point for Fe cation.

Belongs to the polypeptide deformylase family. Fe(2+) is required as a cofactor.

The enzyme catalyses N-terminal N-formyl-L-methionyl-[peptide] + H2O = N-terminal L-methionyl-[peptide] + formate. Its function is as follows. Removes the formyl group from the N-terminal Met of newly synthesized proteins. Requires at least a dipeptide for an efficient rate of reaction. N-terminal L-methionine is a prerequisite for activity but the enzyme has broad specificity at other positions. This chain is Peptide deformylase, found in Maricaulis maris (strain MCS10) (Caulobacter maris).